Consider the following 268-residue polypeptide: Protein DEEPER ROOTING 1 (268 aa).

Over residues 11 to 21 (LNGKQGNKKPN) the composition is skewed to low complexity. The disordered stretch occupies residues 11 to 39 (LNGKQGNKKPNTVPITTHPAKQEPREEFS). The segment covering 30–39 (AKQEPREEFS) has biased composition (basic and acidic residues). Positions 44-50 (GLLAIGT) match the IGT motif motif. Residues 220–246 (SRAASMKKYLEDRQIPTKKESNTEDDT) are disordered. The span at 227 to 246 (KYLEDRQIPTKKESNTEDDT) shows a compositional bias: basic and acidic residues.

The protein belongs to the LAZY family. In terms of tissue distribution, expressed in roots.

In terms of biological role, involved in the development of the root system architecture by influencing lateral root angles and primary root length. The polypeptide is Protein DEEPER ROOTING 1 (Prunus persica (Peach)).